Reading from the N-terminus, the 73-residue chain is Disintegrin mojastin-2 (73 aa).

Residues 1–73 (EAGEECDCGS…ADCPRNGLYG (73 aa)) enclose the Disintegrin domain. 6 disulfide bridges follow: cysteine 6-cysteine 21, cysteine 8-cysteine 16, cysteine 15-cysteine 38, cysteine 29-cysteine 35, cysteine 34-cysteine 59, and cysteine 47-cysteine 66. The short motif at 51–53 (RGD) is the Cell attachment site element.

It belongs to the venom metalloproteinase (M12B) family. P-II subfamily. P-IIa sub-subfamily. In terms of assembly, monomer (disintegrin). Expressed by the venom gland.

Its subcellular location is the secreted. Its function is as follows. Inhibits the three processes involved in platelet function (adhesion, activation and aggregation). It inhibits platelet adhesion to fibronectin with an IC(50) of 58.6 nM. It inhibits ATP release from platelet induced by ADP with an IC(50) of 19.5 nM on platelet-rich plasma, probably by binding to ADP receptors (P2RY1 and P2RY12). Finally, it inhibits ADP-induced platelet aggregation with IC(50) of 44.7 nM on platelet-rich plasma and 19.3 nM on whole blood, probably by binding to alpha-IIb/beta-3 (ITGA2B/ITGB3). Functionally, inhibits ADP-induced platelet aggregation (IC(50) = 13.8 nM) probably by binding to alpha-IIb/beta-3 (ITGA2B/ITGB3) located on the platelet surface. The polypeptide is Disintegrin mojastin-2 (Crotalus scutulatus scutulatus (Mojave rattlesnake)).